The sequence spans 620 residues: Carotenoid isomerooxygenase (620 aa).

Fe cation contacts are provided by histidine 211, histidine 267, and histidine 337. A disordered region spans residues 440 to 459; sequence NGKQATAGEESPKRDAKRGR. Basic and acidic residues predominate over residues 449–459; sequence ESPKRDAKRGR. Histidine 612 is a binding site for Fe cation.

It belongs to the carotenoid oxygenase family. Requires Fe(2+) as cofactor. Expression follows organogenesis of the larval Bolwig's organ (BO), which mediates larval photophobic behavior. In the adult, expression is restricted exclusively to the brain. Expressed in both neuronal cells and glia cells. Not active within photoreceptors. Active within neuronal cells within the central nervous system.

The catalysed reaction is all-trans-zeaxanthin + O2 = (3R)-11-cis-3-hydroxyretinal + (3R)-all-trans-3-hydroxyretinal. It participates in cofactor metabolism; retinol metabolism. In terms of biological role, catalyzes the oxidative cleavage at the 15,15'-double bond of carotenoids and the simultaneous all-trans to 11-cis isomerization of one cleavage product. Carotenoids like 11-cis retinal can promote visual pigment biogenesis in the dark. Essential for the biosynthesis of the 3-hydroxyretinal chromophore of rhodopsin from zeaxanthin and for proper photoreceptor development. Also essential for larval light perception. In Drosophila melanogaster (Fruit fly), this protein is Carotenoid isomerooxygenase (ninaB).